We begin with the raw amino-acid sequence, 126 residues long: MAILGLGTDIAEIERIEKALGRTGEPFAKRILSEDEVIKFAELKQKGRYLAKRFAVKEAASKALGTGIAKGVTFHDFTVSNDEFGKPILTLSGVAKQIAESMGVNHVHLSISDERHYAVATVIFES.

Mg(2+) is bound by residues aspartate 9 and glutamate 58.

It belongs to the P-Pant transferase superfamily. AcpS family. It depends on Mg(2+) as a cofactor.

It localises to the cytoplasm. The catalysed reaction is apo-[ACP] + CoA = holo-[ACP] + adenosine 3',5'-bisphosphate + H(+). In terms of biological role, transfers the 4'-phosphopantetheine moiety from coenzyme A to a Ser of acyl-carrier-protein. The sequence is that of Holo-[acyl-carrier-protein] synthase from Vibrio campbellii (strain ATCC BAA-1116).